The primary structure comprises 232 residues: Zinc-finger homeodomain protein 5 (232 aa).

Residues 1 to 11 (MELSEHEEDAG) are compositionally biased toward acidic residues. The tract at residues 1–25 (MELSEHEEDAGDVGGGCSSPPTPPH) is disordered. A ZF-HD dimerization-type; degenerate zinc finger spans residues 40-86 (YHECLRNHAAASGGHVVDGCGEFMPASTEEPLACAACGCHRSFHRRD). The tract at residues 126-170 (GLPFPGYGTPSGGTGTTTASSSDERLRPSPVQPRRRSRTTFTREQ) is disordered. The segment at residues 159–222 (RRRSRTTFTR…NNKHSFKQKQ (64 aa)) is a DNA-binding region (homeobox).

In terms of assembly, homo- and heterodimer with other ZFHD proteins.

It localises to the nucleus. Putative transcription factor. In Oryza sativa subsp. japonica (Rice), this protein is Zinc-finger homeodomain protein 5 (ZHD5).